The primary structure comprises 338 residues: Phenylalanine--tRNA ligase alpha subunit (338 aa).

Glu259 lines the Mg(2+) pocket.

The protein belongs to the class-II aminoacyl-tRNA synthetase family. Phe-tRNA synthetase alpha subunit type 1 subfamily. In terms of assembly, tetramer of two alpha and two beta subunits. Requires Mg(2+) as cofactor.

Its subcellular location is the cytoplasm. It carries out the reaction tRNA(Phe) + L-phenylalanine + ATP = L-phenylalanyl-tRNA(Phe) + AMP + diphosphate + H(+). In Janthinobacterium sp. (strain Marseille) (Minibacterium massiliensis), this protein is Phenylalanine--tRNA ligase alpha subunit.